A 100-amino-acid chain; its full sequence is Small ribosomal subunit protein uS14c (100 aa).

This sequence belongs to the universal ribosomal protein uS14 family. As to quaternary structure, part of the 30S ribosomal subunit.

It is found in the plastid. The protein localises to the chloroplast. Functionally, binds 16S rRNA, required for the assembly of 30S particles. The chain is Small ribosomal subunit protein uS14c from Tetradesmus obliquus (Green alga).